The primary structure comprises 627 residues: Pescadillo homolog (627 aa).

Positions 321 to 414 (RLRTLFKGLK…QLLPTNKYFI (94 aa)) constitute a BRCT domain. Disordered stretches follow at residues 450 to 469 (HVQS…ETVD), 488 to 562 (YKKF…LQAR), and 595 to 627 (TIEA…KLGK). Serine 453 and serine 457 each carry phosphoserine. Composition is skewed to acidic residues over residues 454–469 (DDDS…ETVD) and 497–521 (VNED…EELD). Positions 507 to 538 (DDDNEDDDEEEEELDEKTKRLQEEKQKMSVQS) form a coiled coil. Basic and acidic residues predominate over residues 522 to 533 (EKTKRLQEEKQK). The segment covering 540 to 549 (KVHKVNKRQV) has biased composition (basic residues). Composition is skewed to basic and acidic residues over residues 550 to 559 (HKAEVDEHRL) and 595 to 615 (TIEA…RKEA). Positions 582–625 (KEKEEWLLRKKRRTIEASEKEARKTAKREARKEAAAAAAKASKL) form a coiled coil. The segment covering 616-627 (AAAAAKASKLGK) has biased composition (low complexity).

This sequence belongs to the pescadillo family.

Its subcellular location is the nucleus. The protein localises to the nucleolus. It localises to the nucleoplasm. Functionally, required for maturation of ribosomal RNAs and formation of the large ribosomal subunit. This is Pescadillo homolog from Drosophila sechellia (Fruit fly).